Consider the following 703-residue polypeptide: uncharacterized protein (703 aa).

A signal peptide spans 1–23; it reads MKQIMIFLTSFMLLAMTGQTALA. The helical transmembrane segment at 673–693 threads the bilayer; it reads MYIGVLALIMVVAAVFIWIAV.

Its subcellular location is the cell membrane. This is an uncharacterized protein from Bacillus subtilis (strain 168).